Consider the following 166-residue polypeptide: NAD(P)H-quinone oxidoreductase subunit I, chloroplastic (166 aa).

2 consecutive 4Fe-4S ferredoxin-type domains span residues 55-84 (GRIH…VDWK) and 95-124 (LNYS…MTEE). Residues cysteine 64, cysteine 67, cysteine 70, cysteine 74, cysteine 104, cysteine 107, cysteine 110, and cysteine 114 each coordinate [4Fe-4S] cluster.

Belongs to the complex I 23 kDa subunit family. In terms of assembly, NDH is composed of at least 16 different subunits, 5 of which are encoded in the nucleus. [4Fe-4S] cluster is required as a cofactor.

Its subcellular location is the plastid. The protein localises to the chloroplast thylakoid membrane. The enzyme catalyses a plastoquinone + NADH + (n+1) H(+)(in) = a plastoquinol + NAD(+) + n H(+)(out). It catalyses the reaction a plastoquinone + NADPH + (n+1) H(+)(in) = a plastoquinol + NADP(+) + n H(+)(out). In terms of biological role, NDH shuttles electrons from NAD(P)H:plastoquinone, via FMN and iron-sulfur (Fe-S) centers, to quinones in the photosynthetic chain and possibly in a chloroplast respiratory chain. The immediate electron acceptor for the enzyme in this species is believed to be plastoquinone. Couples the redox reaction to proton translocation, and thus conserves the redox energy in a proton gradient. In Oxypappus scaber, this protein is NAD(P)H-quinone oxidoreductase subunit I, chloroplastic.